The primary structure comprises 1848 residues: Histone-lysine N-methyltransferase, H3 lysine-79 specific (1848 aa).

Residues 19–336 (DVISFAWPLQ…ILERYFQRLK (318 aa)) form the DOT1 domain. S-adenosyl-L-methionine contacts are provided by residues 142-145 (YGET), 165-174 (FIDLGSGVGQ), Glu192, and 228-229 (DF). Disordered stretches follow at residues 338–537 (KGGN…TRKA), 558–593 (AVSV…ARGR), 886–908 (LNSV…WPEV), 960–996 (PPPA…QMTL), 1033–1075 (LNED…AQSL), 1165–1190 (HMAS…RSSV), 1221–1333 (QRQQ…TQVS), 1345–1374 (QEKL…KTIG), 1432–1463 (VHVR…GGAA), 1486–1508 (ARAN…GRDY), 1529–1559 (EQQQ…PPLE), 1573–1604 (KYKE…LPTH), 1637–1713 (SPLA…VDPP), and 1731–1757 (QLSH…LQLT). The segment covering 339–360 (GGNDHESVGTVRTTRDRAKREA) has biased composition (basic and acidic residues). Over residues 364-373 (QHHHNNHHSN) the composition is skewed to basic residues. The segment covering 391 to 405 (ATATAAHQQRHQSQS) has biased composition (low complexity). Positions 419-428 (SGQQAASKTR) are enriched in polar residues. 2 stretches are compositionally biased toward low complexity: residues 429–439 (QQLQHQHNQQQ) and 453–474 (DATN…ASNG). A phosphoserine mark is found at Ser491, Ser492, and Ser494. Gly residues predominate over residues 507–518 (GSNGGSIGGGSV). Basic residues-rich tracts occupy residues 526–535 (TQKKRKKLTR) and 582–593 (RKGRMKKGARGR). Low complexity predominate over residues 1221-1235 (QRQQMRVEEQQQQQQ). Residues 1236–1263 (HQHHHHHHHHHPQHRLPQHVQHQHPHQH) show a composition bias toward basic residues. The segment covering 1289-1300 (EPPQTQPLELLP) has biased composition (low complexity). Residues Ser1318, Ser1324, and Ser1325 each carry the phosphoserine modification. Low complexity predominate over residues 1532–1545 (QKQSKGAGSAGSSS). Over residues 1574–1583 (YKEETEERQR) the composition is skewed to basic and acidic residues. Low complexity-rich tracts occupy residues 1585-1598 (AAAA…PPAG) and 1681-1696 (HDAT…SSSS). The span at 1697 to 1706 (CGRRSNSNNG) shows a compositional bias: polar residues.

The protein belongs to the class I-like SAM-binding methyltransferase superfamily. DOT1 family. In terms of tissue distribution, broadly expressed in most tissues. Expressed in a large subset of neurons and in a small subset of glial cells.

The protein localises to the nucleus. The enzyme catalyses L-lysyl(79)-[histone H3] + 3 S-adenosyl-L-methionine = N(6),N(6),N(6)-trimethyl-L-lysyl(79)-[histone H3] + 3 S-adenosyl-L-homocysteine + 3 H(+). In terms of biological role, histone methyltransferase. Methylates 'Lys-79' of histone H3. Required for Polycomb Group (PcG) and trithorax Group (trxG) maintenance of expression. Also involved in telomeric silencing but do not in centric heterochromatin. Probably participates in pairing sensitivity. The polypeptide is Histone-lysine N-methyltransferase, H3 lysine-79 specific (gpp) (Drosophila melanogaster (Fruit fly)).